Consider the following 313-residue polypeptide: Hsp90 co-chaperone Cdc37-like 1 (313 aa).

The protein belongs to the CDC37 family. Forms complexes with Hsp70 and Hsp90.

The protein localises to the cytoplasm. In terms of biological role, co-chaperone that binds to numerous proteins and promotes their interaction with Hsp70 and Hsp90. The sequence is that of Hsp90 co-chaperone Cdc37-like 1 (cdc37l1) from Danio rerio (Zebrafish).